The chain runs to 108 residues: uncharacterized protein (108 aa).

A run of 2 helical transmembrane segments spans residues 51-71 (VFAALFMAPTIQLSFCLFCFL) and 86-106 (PLSTGTVLLFGICCQVAKSLL).

Its subcellular location is the membrane. This is an uncharacterized protein from Saccharomyces cerevisiae (strain ATCC 204508 / S288c) (Baker's yeast).